A 184-amino-acid chain; its full sequence is UPF0398 protein BCG9842_B3730 (184 aa).

Belongs to the UPF0398 family.

In Bacillus cereus (strain G9842), this protein is UPF0398 protein BCG9842_B3730.